We begin with the raw amino-acid sequence, 105 residues long: ATP synthase subunit c (105 aa).

3 helical membrane-spanning segments follow: residues 3-23, 32-52, and 78-98; these read FLALFFLALVGVAFAYDGGMD, SILGAMIGLGIAAFGGAIGMG, and VAMAMIEAQVIYTLVFAIIAI.

It belongs to the ATPase C chain family. As to quaternary structure, F-type ATPases have 2 components, F(1) - the catalytic core - and F(0) - the membrane proton channel. F(1) has five subunits: alpha(3), beta(3), gamma(1), delta(1), epsilon(1). F(0) has three main subunits: a(1), b(2) and c(10-14). The alpha and beta chains form an alternating ring which encloses part of the gamma chain. F(1) is attached to F(0) by a central stalk formed by the gamma and epsilon chains, while a peripheral stalk is formed by the delta and b chains.

Its subcellular location is the cell inner membrane. F(1)F(0) ATP synthase produces ATP from ADP in the presence of a proton or sodium gradient. F-type ATPases consist of two structural domains, F(1) containing the extramembraneous catalytic core and F(0) containing the membrane proton channel, linked together by a central stalk and a peripheral stalk. During catalysis, ATP synthesis in the catalytic domain of F(1) is coupled via a rotary mechanism of the central stalk subunits to proton translocation. Functionally, key component of the F(0) channel; it plays a direct role in translocation across the membrane. A homomeric c-ring of between 10-14 subunits forms the central stalk rotor element with the F(1) delta and epsilon subunits. This chain is ATP synthase subunit c, found in Helicobacter acinonychis (strain Sheeba).